We begin with the raw amino-acid sequence, 422 residues long: UDP-N-acetylglucosamine 1-carboxyvinyltransferase (422 aa).

22 to 23 (KN) provides a ligand contact to phosphoenolpyruvate. Arg-92 is a binding site for UDP-N-acetyl-alpha-D-glucosamine. Cys-116 (proton donor) is an active-site residue. Cys-116 carries the 2-(S-cysteinyl)pyruvic acid O-phosphothioketal modification. Residues 121–125 (RPVDQ), Asp-307, and Ile-329 contribute to the UDP-N-acetyl-alpha-D-glucosamine site.

It belongs to the EPSP synthase family. MurA subfamily.

Its subcellular location is the cytoplasm. The catalysed reaction is phosphoenolpyruvate + UDP-N-acetyl-alpha-D-glucosamine = UDP-N-acetyl-3-O-(1-carboxyvinyl)-alpha-D-glucosamine + phosphate. Its pathway is cell wall biogenesis; peptidoglycan biosynthesis. In terms of biological role, cell wall formation. Adds enolpyruvyl to UDP-N-acetylglucosamine. This chain is UDP-N-acetylglucosamine 1-carboxyvinyltransferase, found in Psychrobacter arcticus (strain DSM 17307 / VKM B-2377 / 273-4).